The chain runs to 192 residues: PBAN-type neuropeptides (192 aa).

Residues 1–23 (MYKTNIVFNVLALALFSIFFASC) form the signal peptide. Leu-47 carries the leucine amide modification. A propeptide spanning residues 51–94 (SMKPSTEDNRQTFLRLLEAADALKFYYDQLPYERQADEPETKVT) is cleaved from the precursor. Leu-103, Leu-122, Leu-158, and Leu-168 each carry leucine amide. Positions 171 to 192 (ELSYDYPTKYRVARSVNKTMDN) are excised as a propeptide.

Belongs to the pyrokinin family. As to expression, expression is restricted to the subesophageal ganglion.

The protein resides in the secreted. Its function is as follows. A hormone that controls sex pheromone production in females and pheromone responsiveness in male. Also mediates visceral muscle contractile activity (myotropic activity). Identical to MRCH which is implicated in the formation of both melanin in the cuticle and ommochrome in the epidermis of armyworm species. Functionally, diapause hormone (DH) is responsible for induction of embryonic diapause. In terms of biological role, the three SGNPS are far less active than DH in inducing diapause eggs. Beta-SGNP expressed higher pban activity than PBAN-I, but alpha- and gamma-SGNP were far less active in pheromonotropic activity. The chain is PBAN-type neuropeptides from Bombyx mori (Silk moth).